The primary structure comprises 385 residues: Outer membrane protein P2 (385 aa).

The first 20 residues, 1 to 20, serve as a signal peptide directing secretion; that stretch reads MKKTLAALIVGAFAASAANA.

It belongs to the Gram-negative porin family. As to quaternary structure, homotrimer.

It is found in the cell outer membrane. In terms of biological role, forms pores that allow passive diffusion of small molecules across the outer membrane. The protein is Outer membrane protein P2 (ompP2) of Haemophilus influenzae.